The chain runs to 362 residues: Peptide chain release factor 1 (362 aa).

Residue Gln237 is modified to N5-methylglutamine.

The protein belongs to the prokaryotic/mitochondrial release factor family. In terms of processing, methylated by PrmC. Methylation increases the termination efficiency of RF1.

It is found in the cytoplasm. Peptide chain release factor 1 directs the termination of translation in response to the peptide chain termination codons UAG and UAA. In Aliivibrio salmonicida (strain LFI1238) (Vibrio salmonicida (strain LFI1238)), this protein is Peptide chain release factor 1.